Here is a 493-residue protein sequence, read N- to C-terminus: Cyclin-dependent kinase-like 2 (493 aa).

The region spanning 4-287 is the Protein kinase domain; sequence YENLGLVGEG…CAELLHHDFF (284 aa). Residues 10–18 and Lys33 each bind ATP; that span reads VGEGSYGMV. The short motif at 45 to 51 is the [NKR]KIAxRE element; the sequence is KKIAMRE. The Proton acceptor role is filled by Asp126. 2 disordered regions span residues 311-338 and 363-384; these read VSLS…KTLV and GEKA…SRTS. The segment covering 320–336 has biased composition (basic and acidic residues); the sequence is RKKEKEKDDSLGEERKT.

This sequence belongs to the protein kinase superfamily. CMGC Ser/Thr protein kinase family. CDC2/CDKX subfamily.

The protein localises to the cytoplasm. Its subcellular location is the nucleus. The catalysed reaction is L-seryl-[protein] + ATP = O-phospho-L-seryl-[protein] + ADP + H(+). It carries out the reaction L-threonyl-[protein] + ATP = O-phospho-L-threonyl-[protein] + ADP + H(+). The protein is Cyclin-dependent kinase-like 2 of Pongo abelii (Sumatran orangutan).